Here is a 317-residue protein sequence, read N- to C-terminus: Methionyl-tRNA formyltransferase (317 aa).

(6S)-5,6,7,8-tetrahydrofolate is bound at residue 110–113 (SLLP).

It belongs to the Fmt family.

It carries out the reaction L-methionyl-tRNA(fMet) + (6R)-10-formyltetrahydrofolate = N-formyl-L-methionyl-tRNA(fMet) + (6S)-5,6,7,8-tetrahydrofolate + H(+). Its function is as follows. Attaches a formyl group to the free amino group of methionyl-tRNA(fMet). The formyl group appears to play a dual role in the initiator identity of N-formylmethionyl-tRNA by promoting its recognition by IF2 and preventing the misappropriation of this tRNA by the elongation apparatus. In Bacillus pumilus (strain SAFR-032), this protein is Methionyl-tRNA formyltransferase.